The chain runs to 595 residues: NADH-quinone oxidoreductase subunit C/D (595 aa).

An NADH dehydrogenase I subunit C region spans residues 1–186 (MVTDNSKATD…TPYFLNNAKQ (186 aa)). The NADH dehydrogenase I subunit D stretch occupies residues 210–595 (DFMFLNLGPN…IDIVMADTDR (386 aa)).

It in the N-terminal section; belongs to the complex I 30 kDa subunit family. This sequence in the C-terminal section; belongs to the complex I 49 kDa subunit family. NDH-1 is composed of 13 different subunits. Subunits NuoB, CD, E, F, and G constitute the peripheral sector of the complex.

It localises to the cell inner membrane. The enzyme catalyses a quinone + NADH + 5 H(+)(in) = a quinol + NAD(+) + 4 H(+)(out). In terms of biological role, NDH-1 shuttles electrons from NADH, via FMN and iron-sulfur (Fe-S) centers, to quinones in the respiratory chain. The immediate electron acceptor for the enzyme in this species is believed to be ubiquinone. Couples the redox reaction to proton translocation (for every two electrons transferred, four hydrogen ions are translocated across the cytoplasmic membrane), and thus conserves the redox energy in a proton gradient. This Psychrobacter sp. (strain PRwf-1) protein is NADH-quinone oxidoreductase subunit C/D.